Reading from the N-terminus, the 314-residue chain is MGCRCCKIIQSYLFDPVQVPSPGYVNEVNSCKLDEDDTDKLKGKWSSEVLVQKNDPQRQGSKKTESSSRTADPWEPCWPHQGPLPQGDAGGEHHACGVNGIGPAATPQPTGNSSPTQDDRGSWASTANTVPPTQPFLEGGGTRKQDCVLLASEGTQVMRNGDSRAPSEAESFALEVQDHVFQIPAPDYLQHWGPAGDNVDHNEKDCVFKNHTEDESLEGIQPPVGEHGLNTPFSVRRSWDSLNEDVETEVLSICFNEKGPVHAMPVVDSGNRQEDTHGSDGDGDGEIVDEDAAVAEALAALEAATAGEDLDETD.

Residue Ser30 is modified to Phosphoserine. Residues 36 to 142 (DDTDKLKGKW…TQPFLEGGGT (107 aa)) form a disordered region. Thr106 is subject to Phosphothreonine. Positions 107-116 (PQPTGNSSPT) are enriched in polar residues. Phosphoserine occurs at positions 238 and 241. The disordered stretch occupies residues 267–291 (VDSGNRQEDTHGSDGDGDGEIVDED). Positions 271–280 (NRQEDTHGSD) are enriched in basic and acidic residues. A compositionally biased stretch (acidic residues) spans 281–291 (GDGDGEIVDED).

In terms of assembly, interacts with KEAP1; this interaction prevents the ubiquitination of KEAP1 by TRIM25, thus protecting KEAP1 from degradation. Found in association with PDCD10 and members of the STE20 kinases, such as STK24, STK25 and STK26.

It localises to the cell membrane. Functionally, acts as a tumor suppressor. Acts as a tumor suppressor for colorectal cancer cell proliferation by targeting KEAP1/USP17/ELK1/CDK6 axis. The chain is PDCD10 and GCKIII kinases-associated protein 1 from Homo sapiens (Human).